The primary structure comprises 271 residues: Shikimate dehydrogenase (NADP(+)) (271 aa).

Shikimate-binding positions include 15–17 and T62; that span reads SKS. Catalysis depends on K66, which acts as the Proton acceptor. Residue E78 coordinates NADP(+). N87 and D103 together coordinate shikimate. NADP(+) is bound by residues 127–131, 151–156, and M214; these read GAGGA and NRTQAK. Y216 is a shikimate binding site. An NADP(+)-binding site is contributed by G238.

The protein belongs to the shikimate dehydrogenase family. Homodimer.

The catalysed reaction is shikimate + NADP(+) = 3-dehydroshikimate + NADPH + H(+). The protein operates within metabolic intermediate biosynthesis; chorismate biosynthesis; chorismate from D-erythrose 4-phosphate and phosphoenolpyruvate: step 4/7. Its function is as follows. Involved in the biosynthesis of the chorismate, which leads to the biosynthesis of aromatic amino acids. Catalyzes the reversible NADPH linked reduction of 3-dehydroshikimate (DHSA) to yield shikimate (SA). This is Shikimate dehydrogenase (NADP(+)) from Shewanella pealeana (strain ATCC 700345 / ANG-SQ1).